The chain runs to 211 residues: Xanthine phosphoribosyltransferase (211 aa).

Xanthine-binding residues include Leu31 and Asn38. 138 to 142 (ANGRT) lines the 5-phospho-alpha-D-ribose 1-diphosphate pocket. Lys166 contributes to the xanthine binding site.

Belongs to the purine/pyrimidine phosphoribosyltransferase family. Xpt subfamily. Homodimer.

The protein resides in the cytoplasm. It catalyses the reaction XMP + diphosphate = xanthine + 5-phospho-alpha-D-ribose 1-diphosphate. The protein operates within purine metabolism; XMP biosynthesis via salvage pathway; XMP from xanthine: step 1/1. Functionally, converts the preformed base xanthine, a product of nucleic acid breakdown, to xanthosine 5'-monophosphate (XMP), so it can be reused for RNA or DNA synthesis. This chain is Xanthine phosphoribosyltransferase, found in Chloroflexus aurantiacus (strain ATCC 29364 / DSM 637 / Y-400-fl).